The chain runs to 248 residues: Deoxyribose-phosphate aldolase (248 aa).

Asp-117 functions as the Proton donor/acceptor in the catalytic mechanism. Lys-179 (schiff-base intermediate with acetaldehyde) is an active-site residue. Lys-208 acts as the Proton donor/acceptor in catalysis.

This sequence belongs to the DeoC/FbaB aldolase family. DeoC type 1 subfamily.

The protein localises to the cytoplasm. The enzyme catalyses 2-deoxy-D-ribose 5-phosphate = D-glyceraldehyde 3-phosphate + acetaldehyde. It functions in the pathway carbohydrate degradation; 2-deoxy-D-ribose 1-phosphate degradation; D-glyceraldehyde 3-phosphate and acetaldehyde from 2-deoxy-alpha-D-ribose 1-phosphate: step 2/2. Catalyzes a reversible aldol reaction between acetaldehyde and D-glyceraldehyde 3-phosphate to generate 2-deoxy-D-ribose 5-phosphate. In Thermotoga sp. (strain RQ2), this protein is Deoxyribose-phosphate aldolase.